The primary structure comprises 61 residues: UPF0434 protein MS0934 (61 aa).

Belongs to the UPF0434 family.

The protein is UPF0434 protein MS0934 of Mannheimia succiniciproducens (strain KCTC 0769BP / MBEL55E).